A 278-amino-acid chain; its full sequence is ATP synthase subunit delta (278 aa).

It belongs to the ATPase delta chain family. In terms of assembly, F-type ATPases have 2 components, F(1) - the catalytic core - and F(0) - the membrane proton channel. F(1) has five subunits: alpha(3), beta(3), gamma(1), delta(1), epsilon(1). F(0) has three main subunits: a(1), b(2) and c(10-14). The alpha and beta chains form an alternating ring which encloses part of the gamma chain. F(1) is attached to F(0) by a central stalk formed by the gamma and epsilon chains, while a peripheral stalk is formed by the delta and b chains.

The protein resides in the cell membrane. Functionally, f(1)F(0) ATP synthase produces ATP from ADP in the presence of a proton or sodium gradient. F-type ATPases consist of two structural domains, F(1) containing the extramembraneous catalytic core and F(0) containing the membrane proton channel, linked together by a central stalk and a peripheral stalk. During catalysis, ATP synthesis in the catalytic domain of F(1) is coupled via a rotary mechanism of the central stalk subunits to proton translocation. This protein is part of the stalk that links CF(0) to CF(1). It either transmits conformational changes from CF(0) to CF(1) or is implicated in proton conduction. The polypeptide is ATP synthase subunit delta (Rhodococcus opacus (strain B4)).